The sequence spans 585 residues: Glycerol-3-phosphate dehydrogenase (585 aa).

37–65 lines the FAD pocket; that stretch reads DVVVIGGGVVGSGCALDAATRGLKVALVE.

It belongs to the FAD-dependent glycerol-3-phosphate dehydrogenase family. FAD serves as cofactor.

Its subcellular location is the cytoplasm. It catalyses the reaction a quinone + sn-glycerol 3-phosphate = dihydroxyacetone phosphate + a quinol. The protein is Glycerol-3-phosphate dehydrogenase (glpD) of Mycobacterium leprae (strain TN).